The following is a 355-amino-acid chain: Protein MGF 360-3L (355 aa).

One copy of the ANK repeat lies at 60-92; it reads KLNTALVLAVKENNYDLIVLFTEWGANINYALL.

It belongs to the asfivirus MGF 360 family.

Its function is as follows. Plays a role in virus cell tropism, and may be required for efficient virus replication in macrophages. This is Protein MGF 360-3L from Ornithodoros (relapsing fever ticks).